Reading from the N-terminus, the 318-residue chain is MFMINVLSLIIPILLAVAFLTLVERKVLGYMQLRKGPNVVGPYGLLQPIADAVKLFTKEPLRPLTSSMLMFIMAPILALTLALTMWIPLPMPYPLINMNLGVLFMLAMSSLAVYSILWSGWASNSKYALIGALRAVAQTISYEVTLAIILLSVLLMNGSFTLAMLITTQEYMWLIIPAWPLAMMWFISTLAETNRAPFDLTEGESELVSGFDVEYAAGPFALFFLAEYANIIMMNILTTILFFGAFHSPYMPELYTINFTVKTLLLTTTFLWIRASYPRFRYDQLMHLLWKNFLPLTLALCMWHVSLPIITASIPPQT.

The next 8 helical transmembrane spans lie at 2-22 (FMIN…FLTL), 69-89 (LMFI…WIPL), 100-120 (LGVL…LWSG), 146-166 (LAII…AMLI), 171-191 (YMWL…STLA), 223-243 (FFLA…ILFF), 253-273 (ELYT…FLWI), and 294-314 (LPLT…TASI).

The protein belongs to the complex I subunit 1 family. As to quaternary structure, core subunit of respiratory chain NADH dehydrogenase (Complex I) which is composed of 45 different subunits.

Its subcellular location is the mitochondrion inner membrane. The catalysed reaction is a ubiquinone + NADH + 5 H(+)(in) = a ubiquinol + NAD(+) + 4 H(+)(out). Functionally, core subunit of the mitochondrial membrane respiratory chain NADH dehydrogenase (Complex I) which catalyzes electron transfer from NADH through the respiratory chain, using ubiquinone as an electron acceptor. Essential for the catalytic activity and assembly of complex I. The sequence is that of NADH-ubiquinone oxidoreductase chain 1 (MT-ND1) from Felis catus (Cat).